The primary structure comprises 150 residues: Large ribosomal subunit protein bL9 (150 aa).

The protein belongs to the bacterial ribosomal protein bL9 family.

Functionally, binds to the 23S rRNA. The protein is Large ribosomal subunit protein bL9 of Shewanella pealeana (strain ATCC 700345 / ANG-SQ1).